Reading from the N-terminus, the 671-residue chain is DNA ligase (671 aa).

NAD(+)-binding positions include 32-36 (DAEYD), 81-82 (SL), and Glu113. Catalysis depends on Lys115, which acts as the N6-AMP-lysine intermediate. Positions 136, 173, 290, and 314 each coordinate NAD(+). Positions 408, 411, 426, and 432 each coordinate Zn(2+). The BRCT domain maps to 593–671 (EIDSPFAGKT…EAEMLRLLGV (79 aa)).

The protein belongs to the NAD-dependent DNA ligase family. LigA subfamily. Mg(2+) serves as cofactor. It depends on Mn(2+) as a cofactor.

It catalyses the reaction NAD(+) + (deoxyribonucleotide)n-3'-hydroxyl + 5'-phospho-(deoxyribonucleotide)m = (deoxyribonucleotide)n+m + AMP + beta-nicotinamide D-nucleotide.. Its function is as follows. DNA ligase that catalyzes the formation of phosphodiester linkages between 5'-phosphoryl and 3'-hydroxyl groups in double-stranded DNA using NAD as a coenzyme and as the energy source for the reaction. It is essential for DNA replication and repair of damaged DNA. This is DNA ligase from Salmonella arizonae (strain ATCC BAA-731 / CDC346-86 / RSK2980).